The primary structure comprises 341 residues: Methionine import ATP-binding protein MetN 1 (341 aa).

The region spanning 2–241 (IEFRQVSKSF…PKTTIAQNFV (240 aa)) is the ABC transporter domain. 38 to 45 (GYSGAGKS) lines the ATP pocket.

This sequence belongs to the ABC transporter superfamily. Methionine importer (TC 3.A.1.24) family. The complex is composed of two ATP-binding proteins (MetN), two transmembrane proteins (MetI) and a solute-binding protein (MetQ).

It is found in the cell membrane. It carries out the reaction L-methionine(out) + ATP + H2O = L-methionine(in) + ADP + phosphate + H(+). The catalysed reaction is D-methionine(out) + ATP + H2O = D-methionine(in) + ADP + phosphate + H(+). Part of the ABC transporter complex MetNIQ involved in methionine import. Responsible for energy coupling to the transport system. This chain is Methionine import ATP-binding protein MetN 1, found in Staphylococcus aureus (strain bovine RF122 / ET3-1).